The primary structure comprises 199 residues: NAD(P)H dehydrogenase (quinone) (199 aa).

Residues 4 to 190 enclose the Flavodoxin-like domain; that stretch reads VLVLYYSAYG…DAARFQGAHV (187 aa). FMN is bound by residues 10 to 15 and 78 to 80; these read SAYGHI and TRY. Y12 provides a ligand contact to NAD(+). A substrate-binding site is contributed by W98. Residues 113-119 and H134 contribute to the FMN site; that span reads SSATQHG.

The protein belongs to the WrbA family. FMN is required as a cofactor.

It carries out the reaction a quinone + NADH + H(+) = a quinol + NAD(+). The catalysed reaction is a quinone + NADPH + H(+) = a quinol + NADP(+). The polypeptide is NAD(P)H dehydrogenase (quinone) (Sinorhizobium fredii (strain NBRC 101917 / NGR234)).